Reading from the N-terminus, the 590-residue chain is L-gulonolactone oxidase 5 (590 aa).

The N-terminal stretch at 1–31 (MAFGYSPSYCSFWRTLLGLYCLFTLVHTVIS) is a signal peptide. One can recognise an FAD-binding PCMH-type domain in the interval 60–242 (STCRAANVAY…SQVTFELQPM (183 aa)).

This sequence belongs to the oxygen-dependent FAD-linked oxidoreductase family. It depends on FAD as a cofactor.

It carries out the reaction L-gulono-1,4-lactone + O2 = L-ascorbate + H2O2 + H(+). Its pathway is cofactor biosynthesis; L-ascorbate biosynthesis. Its function is as follows. Catalyzes the oxidation of L-gulono-1,4-lactone to ascorbic acid. L-gulono-1,4-lactone is oxidized to hydrogen peroxide and L-xylo-hexulonolactone which spontaneously isomerizes to L-ascorbate. This chain is L-gulonolactone oxidase 5, found in Arabidopsis thaliana (Mouse-ear cress).